The primary structure comprises 26 residues: Peroxidase 1 (26 aa).

Position 15 (Asp-15) interacts with Ca(2+).

Belongs to the peroxidase family. Classical plant (class III) peroxidase subfamily. Heme b is required as a cofactor. It depends on Ca(2+) as a cofactor.

The protein resides in the secreted. It carries out the reaction 2 a phenolic donor + H2O2 = 2 a phenolic radical donor + 2 H2O. Removal of H(2)O(2), oxidation of toxic reductants, biosynthesis and degradation of lignin, suberization, auxin catabolism, response to environmental stresses such as wounding, pathogen attack and oxidative stress. These functions might be dependent on each isozyme/isoform in each plant tissue. This Vitis vinifera (Grape) protein is Peroxidase 1.